Here is a 369-residue protein sequence, read N- to C-terminus: 2-aminoethylphosphonate--pyruvate transaminase (369 aa).

Lys-193 carries the post-translational modification N6-(pyridoxal phosphate)lysine.

Belongs to the class-V pyridoxal-phosphate-dependent aminotransferase family. PhnW subfamily. As to quaternary structure, homodimer. Pyridoxal 5'-phosphate is required as a cofactor.

The enzyme catalyses (2-aminoethyl)phosphonate + pyruvate = phosphonoacetaldehyde + L-alanine. Involved in phosphonate degradation. The protein is 2-aminoethylphosphonate--pyruvate transaminase of Burkholderia pseudomallei (strain 1106a).